A 156-amino-acid polypeptide reads, in one-letter code: Arginine repressor (156 aa).

It belongs to the ArgR family.

Its subcellular location is the cytoplasm. It participates in amino-acid biosynthesis; L-arginine biosynthesis [regulation]. Its function is as follows. Regulates arginine biosynthesis genes. The polypeptide is Arginine repressor (Vibrio atlanticus (strain LGP32) (Vibrio splendidus (strain Mel32))).